We begin with the raw amino-acid sequence, 65 residues long: Small, acid-soluble spore protein H 3 (65 aa).

This sequence belongs to the SspH family.

The protein localises to the spore core. This chain is Small, acid-soluble spore protein H 3, found in Geobacillus thermodenitrificans (strain NG80-2).